Reading from the N-terminus, the 84-residue chain is Polcalcin Ole e 3 (84 aa).

2 EF-hand domains span residues 6–40 and 41–76; these read QEVA…TLGS and VTPE…NRGL. Residues D19, N21, D23, K25, E30, D54, D56, D58, and E65 each coordinate Ca(2+).

As to expression, expressed exclusively in mature pollen.

It is found in the endomembrane system. The sequence is that of Polcalcin Ole e 3 (OLE3) from Olea europaea (Common olive).